A 286-amino-acid polypeptide reads, in one-letter code: D-tagatose-1,6-bisphosphate aldolase subunit KbaY (286 aa).

Asp-82 functions as the Proton donor in the catalytic mechanism. The Zn(2+) site is built by His-83 and His-180. Gly-181 contacts dihydroxyacetone phosphate. His-208 lines the Zn(2+) pocket. Residues 209-211 (GAS) and 230-233 (NVAT) each bind dihydroxyacetone phosphate.

The protein belongs to the class II fructose-bisphosphate aldolase family. TagBP aldolase KbaY subfamily. As to quaternary structure, homotetramer. Forms a complex with KbaZ. It depends on Zn(2+) as a cofactor.

It catalyses the reaction D-tagatofuranose 1,6-bisphosphate = D-glyceraldehyde 3-phosphate + dihydroxyacetone phosphate. It functions in the pathway carbohydrate metabolism; D-tagatose 6-phosphate degradation; D-glyceraldehyde 3-phosphate and glycerone phosphate from D-tagatose 6-phosphate: step 2/2. Catalytic subunit of the tagatose-1,6-bisphosphate aldolase KbaYZ, which catalyzes the reversible aldol condensation of dihydroxyacetone phosphate (DHAP or glycerone-phosphate) with glyceraldehyde 3-phosphate (G3P) to produce tagatose 1,6-bisphosphate (TBP). Requires KbaZ subunit for full activity and stability. This is D-tagatose-1,6-bisphosphate aldolase subunit KbaY from Escherichia coli O7:K1 (strain IAI39 / ExPEC).